The primary structure comprises 285 residues: Bifunctional protein FolD (285 aa).

Residues 165 to 167 (GRS) and S190 each bind NADP(+).

Belongs to the tetrahydrofolate dehydrogenase/cyclohydrolase family. Homodimer.

It carries out the reaction (6R)-5,10-methylene-5,6,7,8-tetrahydrofolate + NADP(+) = (6R)-5,10-methenyltetrahydrofolate + NADPH. It catalyses the reaction (6R)-5,10-methenyltetrahydrofolate + H2O = (6R)-10-formyltetrahydrofolate + H(+). It functions in the pathway one-carbon metabolism; tetrahydrofolate interconversion. Functionally, catalyzes the oxidation of 5,10-methylenetetrahydrofolate to 5,10-methenyltetrahydrofolate and then the hydrolysis of 5,10-methenyltetrahydrofolate to 10-formyltetrahydrofolate. This Burkholderia pseudomallei (strain 1106a) protein is Bifunctional protein FolD.